The chain runs to 336 residues: Holliday junction branch migration complex subunit RuvB (336 aa).

The segment at 4–184 is large ATPase domain (RuvB-L); it reads ADRIISAIAK…FGIVQRLEFY (181 aa). Residues Ile-23, Arg-24, Gly-65, Lys-68, Thr-69, Thr-70, 131-133, Arg-174, Tyr-184, and Arg-221 contribute to the ATP site; that span reads EDY. Mg(2+) is bound at residue Thr-69. Residues 185–255 form a small ATPAse domain (RuvB-S) region; that stretch reads SIEDLTSIVM…IAKAALAMLD (71 aa). The interval 258–336 is head domain (RuvB-H); sequence QAGFDYLDRK…HFGLAKLADK (79 aa). Arg-294, Arg-313, and Arg-318 together coordinate DNA.

This sequence belongs to the RuvB family. Homohexamer. Forms an RuvA(8)-RuvB(12)-Holliday junction (HJ) complex. HJ DNA is sandwiched between 2 RuvA tetramers; dsDNA enters through RuvA and exits via RuvB. An RuvB hexamer assembles on each DNA strand where it exits the tetramer. Each RuvB hexamer is contacted by two RuvA subunits (via domain III) on 2 adjacent RuvB subunits; this complex drives branch migration. In the full resolvosome a probable DNA-RuvA(4)-RuvB(12)-RuvC(2) complex forms which resolves the HJ.

The protein resides in the cytoplasm. It carries out the reaction ATP + H2O = ADP + phosphate + H(+). Its function is as follows. The RuvA-RuvB-RuvC complex processes Holliday junction (HJ) DNA during genetic recombination and DNA repair, while the RuvA-RuvB complex plays an important role in the rescue of blocked DNA replication forks via replication fork reversal (RFR). RuvA specifically binds to HJ cruciform DNA, conferring on it an open structure. The RuvB hexamer acts as an ATP-dependent pump, pulling dsDNA into and through the RuvAB complex. RuvB forms 2 homohexamers on either side of HJ DNA bound by 1 or 2 RuvA tetramers; 4 subunits per hexamer contact DNA at a time. Coordinated motions by a converter formed by DNA-disengaged RuvB subunits stimulates ATP hydrolysis and nucleotide exchange. Immobilization of the converter enables RuvB to convert the ATP-contained energy into a lever motion, pulling 2 nucleotides of DNA out of the RuvA tetramer per ATP hydrolyzed, thus driving DNA branch migration. The RuvB motors rotate together with the DNA substrate, which together with the progressing nucleotide cycle form the mechanistic basis for DNA recombination by continuous HJ branch migration. Branch migration allows RuvC to scan DNA until it finds its consensus sequence, where it cleaves and resolves cruciform DNA. The polypeptide is Holliday junction branch migration complex subunit RuvB (Actinobacillus succinogenes (strain ATCC 55618 / DSM 22257 / CCUG 43843 / 130Z)).